The sequence spans 122 residues: Large ribosomal subunit protein uL14 (122 aa).

Belongs to the universal ribosomal protein uL14 family. Part of the 50S ribosomal subunit. Forms a cluster with proteins L3 and L19. In the 70S ribosome, L14 and L19 interact and together make contacts with the 16S rRNA in bridges B5 and B8.

Its function is as follows. Binds to 23S rRNA. Forms part of two intersubunit bridges in the 70S ribosome. The polypeptide is Large ribosomal subunit protein uL14 (Methylibium petroleiphilum (strain ATCC BAA-1232 / LMG 22953 / PM1)).